The sequence spans 408 residues: UDP-N-acetylglucosamine--N-acetylmuramyl-(pentapeptide) pyrophosphoryl-undecaprenol N-acetylglucosamine transferase (408 aa).

A disordered region spans residues Met-1 to Gly-20. Residues Thr-41–Gly-43, Asn-160, Arg-197, Ser-231, and Gln-327 contribute to the UDP-N-acetyl-alpha-D-glucosamine site.

This sequence belongs to the glycosyltransferase 28 family. MurG subfamily.

The protein resides in the cell membrane. The enzyme catalyses di-trans,octa-cis-undecaprenyl diphospho-N-acetyl-alpha-D-muramoyl-L-alanyl-D-glutamyl-meso-2,6-diaminopimeloyl-D-alanyl-D-alanine + UDP-N-acetyl-alpha-D-glucosamine = di-trans,octa-cis-undecaprenyl diphospho-[N-acetyl-alpha-D-glucosaminyl-(1-&gt;4)]-N-acetyl-alpha-D-muramoyl-L-alanyl-D-glutamyl-meso-2,6-diaminopimeloyl-D-alanyl-D-alanine + UDP + H(+). It functions in the pathway cell wall biogenesis; peptidoglycan biosynthesis. Functionally, cell wall formation. Catalyzes the transfer of a GlcNAc subunit on undecaprenyl-pyrophosphoryl-MurNAc-pentapeptide (lipid intermediate I) to form undecaprenyl-pyrophosphoryl-MurNAc-(pentapeptide)GlcNAc (lipid intermediate II). The polypeptide is UDP-N-acetylglucosamine--N-acetylmuramyl-(pentapeptide) pyrophosphoryl-undecaprenol N-acetylglucosamine transferase (Mycolicibacterium paratuberculosis (strain ATCC BAA-968 / K-10) (Mycobacterium paratuberculosis)).